Consider the following 236-residue polypeptide: Urease accessory protein UreG (236 aa).

The disordered stretch occupies residues methionine 1 to histidine 26. GTP is bound at residue glycine 42–threonine 49.

Belongs to the SIMIBI class G3E GTPase family. UreG subfamily. Homodimer. UreD, UreF and UreG form a complex that acts as a GTP-hydrolysis-dependent molecular chaperone, activating the urease apoprotein by helping to assemble the nickel containing metallocenter of UreC. The UreE protein probably delivers the nickel.

It localises to the cytoplasm. Functionally, facilitates the functional incorporation of the urease nickel metallocenter. This process requires GTP hydrolysis, probably effectuated by UreG. This chain is Urease accessory protein UreG, found in Anaeromyxobacter sp. (strain Fw109-5).